A 297-amino-acid chain; its full sequence is Mitochondrial citrate transporter A (297 aa).

Solcar repeat units lie at residues 12-91 (PSSL…LKSL), 102-188 (PKTV…LKQM), and 199-286 (LGTA…TMDA). 6 consecutive transmembrane segments (helical) span residues 18–31 (IIAGSTAGAVEIAI), 61–81 (SQWYAGCTTLIIGNSLKAGIR), 99–119 (ISGPKTVIAGFGAGFTESLLA), 160–180 (FFQGFVPTTARQAANSATRFS), 192–212 (YVAPGEKLGTASTFALGGIAG), and 251–272 (KDEGIFTFWSGAVPRLARLIMS).

It belongs to the mitochondrial carrier (TC 2.A.29) family.

Its subcellular location is the mitochondrion inner membrane. It catalyses the reaction citrate(in) + H(+)(in) = citrate(out) + H(+)(out). Functionally, mitochondrial transporter that mediates citrate export from mitochondria to cytoplasm. Both ctpA, ctpB, and ctpD play important roles in citric acid transport across the mitochondrial membrane and function in a redundant manner. The polypeptide is Mitochondrial citrate transporter A (Aspergillus niger (strain ATCC 1015 / CBS 113.46 / FGSC A1144 / LSHB Ac4 / NCTC 3858a / NRRL 328 / USDA 3528.7)).